A 349-amino-acid polypeptide reads, in one-letter code: MKSTFGLLALAAAAKLVSAHATVHAVWINDVDQGAGNSADGYIRSPPNNSPITDVTSTDMTCNVNGKNPVAKTLSVKAGDKVTFEWHHDTRSDSDDIIASSHMGPVMVYMAPTEKGTAGNGWVKIAEEGYSNGKWAVANLIANRGKHSITVPDVPAGEYLLRPEIIALHEGNRQGGAQFYMECVQVKVTSAGTKTLPAGVSIPGAYKATDPGVLFDMYNSFTSYPIPGPAVWDGSSSGSSGSSGSSPATTTAPAVSVTAVPTKEAPVDTSATPTTFVTATKPATTAAPAAPSASSGSNSGSDSCNSGSASGSVKIYGQCGGQNYSGPTSCEAGLICKEWNPYYHQCVSA.

An N-terminal signal peptide occupies residues 1 to 19 (MKSTFGLLALAAAAKLVSA). Cu(2+) is bound by residues His-20 and His-102. Cys-62 and Cys-183 are oxidised to a cystine. His-169 lines the O2 pocket. A Cu(2+)-binding site is contributed by Tyr-180. Positions 233-304 (DGSSSGSSGS…SGSNSGSDSC (72 aa)) are disordered. Composition is skewed to low complexity over residues 234–262 (GSSS…AVPT) and 269–304 (TSAT…SDSC). The 37-residue stretch at 311-347 (GSVKIYGQCGGQNYSGPTSCEAGLICKEWNPYYHQCV) folds into the CBM1 domain. Asn-323 carries N-linked (GlcNAc...) asparagine glycosylation.

Belongs to the polysaccharide monooxygenase AA9 family. Cu(2+) is required as a cofactor.

It is found in the secreted. It carries out the reaction [(1-&gt;4)-beta-D-glucosyl]n+m + reduced acceptor + O2 = 4-dehydro-beta-D-glucosyl-[(1-&gt;4)-beta-D-glucosyl]n-1 + [(1-&gt;4)-beta-D-glucosyl]m + acceptor + H2O.. Lytic polysaccharide monooxygenase (LPMO) that depolymerizes crystalline and amorphous polysaccharides via the oxidation of scissile alpha- or beta-(1-4)-glycosidic bonds, yielding C4 oxidation products. Catalysis by LPMOs requires the reduction of the active-site copper from Cu(II) to Cu(I) by a reducing agent and H(2)O(2) or O(2) as a cosubstrate. The chain is AA9 family lytic polysaccharide monooxygenase A (eglD) from Aspergillus fumigatus (strain CBS 144.89 / FGSC A1163 / CEA10) (Neosartorya fumigata).